The primary structure comprises 66 residues: Large ribosomal subunit protein uL29 (66 aa).

It belongs to the universal ribosomal protein uL29 family.

The polypeptide is Large ribosomal subunit protein uL29 (Bacillus anthracis (strain CDC 684 / NRRL 3495)).